Reading from the N-terminus, the 110-residue chain is Disintegrin jerdostatin (110 aa).

An N-terminal signal peptide occupies residues 1–20 (MIQVLLVTICLAVFPYQVSS). A propeptide spanning residues 21–67 (KTLKSGSVNEYEVVNPGTVTGLPKGAVKQPEKKHEPMKGNTLQKLPL) is cleaved from the precursor. A Disintegrin domain is found at 27-110 (SVNEYEVVNP…CECPSYPGNG (84 aa)). Disulfide bonds link cysteine 68–cysteine 77, cysteine 73–cysteine 96, cysteine 74–cysteine 101, and cysteine 86–cysteine 103. Positions 88 to 90 (RTS) match the Cell attachment site; atypical (RTS) motif.

It belongs to the disintegrin family. Short disintegrin subfamily. Monomer. In terms of processing, two conformers are found, they may differ by their disulfide bond connectivities. Conformer 2 is 33 times less active than conformer 1. Conformer 2 may represent a non-native protein. Post-translationally, the C-terminal dipeptide may be post-translationally removed, as seen in disintegrins that possess a KTS integrin-binding motif. As to expression, expressed by the venom gland.

The protein resides in the secreted. In terms of biological role, recombinant protein inhibits the adhesion of alpha-1/beta-1-K562 (ITGA1/ITGB1) cells to collagen IV with an IC(50) of 80 nM. This is Disintegrin jerdostatin from Protobothrops jerdonii (Jerdon's pitviper).